Reading from the N-terminus, the 693-residue chain is Polyribonucleotide nucleotidyltransferase (693 aa).

Residues aspartate 485 and aspartate 491 each contribute to the Mg(2+) site. The 60-residue stretch at 552–611 (PRIMVLEINPSKIGDLIGPSGKNIKKIIEETHTTINIKPEGLVYISAPDQESAEKAAQMV) folds into the KH domain. The S1 motif domain maps to 621–691 (GDIFLGKVIR…SSGRISLTRK (71 aa)).

It belongs to the polyribonucleotide nucleotidyltransferase family. It depends on Mg(2+) as a cofactor.

Its subcellular location is the cytoplasm. The catalysed reaction is RNA(n+1) + phosphate = RNA(n) + a ribonucleoside 5'-diphosphate. In terms of biological role, involved in mRNA degradation. Catalyzes the phosphorolysis of single-stranded polyribonucleotides processively in the 3'- to 5'-direction. This is Polyribonucleotide nucleotidyltransferase from Dictyoglomus thermophilum (strain ATCC 35947 / DSM 3960 / H-6-12).